The following is a 728-amino-acid chain: MCGSDDSFDDFVPDSQEPASSRTRNQDHLDDDEVPCSQRPDAANDTMVEDLDEGDEPAHDESEDIIKILVATDIHCGYGENKANIHMDAVNTFEEVLQIATEQKVDMILLGGDLFHENNPSREVQHRVTQLLRQYCLNGNPIALEFLSDASVNFNQSVFGHVNYYDQNLNVGLPIFTIHGNHDDLSGKGLTALDLLHESGLVNLFGKHSNIQEFIVSPILLRKGETRLALYGIGSQRDDRLVRAFKNNSISFLRPNAGAEDWFNLFVLHQNRPRRAMHRSTGNFLPESLIPQFFDLLIWGHEHECKPDPQYVASSEAVGDGFYILQPGSTVATSLTPEEALQKNAFLIKIKGRKFASKPIPLQTVRPMVCDELLLDKIPPGSRPILKTDRPKHTDGRYIDEIAIEAKINEMITTAKAKRRPRQPELPLIRLKVIYDGDWLNITPANAKRIGLRYENVVANAVDMVFIKKNNKPKEGKLQTENEKNITEMADEMGQVSATNLQTIINDYFINQPLVDQMTVLKPIGIGRALEQYSAIEEGGLATSANRNFDSCLMHQIDVVRKTLKKMPLPPINDPSDLDKFRDLITKDLYDMKKADSERFKNPVADVEMEEDEDDPQYYMPPQSTSRTNYASGSEDEVANSDEEMGSSISRHSKQPTTRGRGRGARGAGASRETTRGRSNKVVSTRQIDSDGFEIINDSPSPPPASRSTRGKARGKSAPSKKRDLSFF.

The segment covering 1-12 has biased composition (acidic residues); it reads MCGSDDSFDDFV. Positions 1–45 are disordered; it reads MCGSDDSFDDFVPDSQEPASSRTRNQDHLDDDEVPCSQRPDAAND. The Mn(2+) site is built by Asp-73, His-75, Asp-113, and Asn-181. Catalysis depends on His-182, which acts as the Proton donor. His-269, His-301, and His-303 together coordinate Mn(2+). The disordered stretch occupies residues 601–728; sequence KNPVADVEME…PSKKRDLSFF (128 aa). Positions 607–616 are enriched in acidic residues; that stretch reads VEMEEDEDDP. Over residues 622 to 632 the composition is skewed to polar residues; that stretch reads PQSTSRTNYAS. The segment covering 634-645 has biased composition (acidic residues); the sequence is SEDEVANSDEEM.

It belongs to the MRE11/RAD32 family. As to quaternary structure, component of the MRN complex composed of two heterodimers rad-50 and mre-11 associated with a single nbs-1. The cofactor is Mn(2+).

The protein localises to the nucleus. It localises to the chromosome. Its function is as follows. Core component of the MRN complex, which plays a central role in double-strand break (DSB) repair, DNA recombination, maintenance of telomere integrity and meiosis. The MRN complex is involved in the repair of DNA double-strand breaks (DSBs) via homologous recombination (HR), an error-free mechanism which primarily occurs during S and G2 phases. The complex (1) mediates the end resection of damaged DNA, which generates proper single-stranded DNA, a key initial steps in HR, and is (2) required for the recruitment of other repair factors and efficient activation of ATM and ATR upon DNA damage. Within the MRN complex, mre-11 possesses both single-strand endonuclease activity and double-strand-specific 3'-5' exonuclease activity. Mre-11 first endonucleolytically cleaves the 5' strand at DNA DSB ends to prevent non-homologous end joining (NHEJ) and licence HR. It then generates a single-stranded DNA gap via 3' to 5' exonucleolytic degradation, which is required for single-strand invasion and recombination. Required for meiotic crossing over and chiasma formation. Pachytene morphology and homolog pairing are normal. Vital in long term for maintenance of reproductive capacity of subsequent generations. In Caenorhabditis elegans, this protein is Double-strand break repair protein mre-11.